A 236-amino-acid polypeptide reads, in one-letter code: Ribose-5-phosphate isomerase A (236 aa).

Substrate is bound by residues 28–31 (TGST), 83–86 (DGAD), and 96–99 (KGGG). Glutamate 105 acts as the Proton acceptor in catalysis. Lysine 123 is a binding site for substrate.

The protein belongs to the ribose 5-phosphate isomerase family. Homodimer.

It carries out the reaction aldehydo-D-ribose 5-phosphate = D-ribulose 5-phosphate. Its pathway is carbohydrate degradation; pentose phosphate pathway; D-ribose 5-phosphate from D-ribulose 5-phosphate (non-oxidative stage): step 1/1. Functionally, catalyzes the reversible conversion of ribose-5-phosphate to ribulose 5-phosphate. In Afipia carboxidovorans (strain ATCC 49405 / DSM 1227 / KCTC 32145 / OM5) (Oligotropha carboxidovorans), this protein is Ribose-5-phosphate isomerase A.